A 594-amino-acid chain; its full sequence is UvrABC system protein C (594 aa).

Positions 13–99 constitute a GIY-YIG domain; sequence NSSGVYQYFD…IKQLKPKYNI (87 aa). In terms of domain architecture, UVR spans 205 to 240; the sequence is DRLIKELELKMERLSSKLRFEEALIYRDRIAKIQKI.

This sequence belongs to the UvrC family. As to quaternary structure, interacts with UvrB in an incision complex.

The protein resides in the cytoplasm. Its function is as follows. The UvrABC repair system catalyzes the recognition and processing of DNA lesions. UvrC both incises the 5' and 3' sides of the lesion. The N-terminal half is responsible for the 3' incision and the C-terminal half is responsible for the 5' incision. The sequence is that of UvrABC system protein C from Helicobacter pylori (strain P12).